The following is a 185-amino-acid chain: dCTP deaminase (185 aa).

DCTP is bound by residues 107–112 (KSTYAR), 131–133 (TLE), Gln-152, Tyr-166, and Gln-176. The active-site Proton donor/acceptor is the Glu-133.

This sequence belongs to the dCTP deaminase family. As to quaternary structure, homotrimer.

It catalyses the reaction dCTP + H2O + H(+) = dUTP + NH4(+). The protein operates within pyrimidine metabolism; dUMP biosynthesis; dUMP from dCTP (dUTP route): step 1/2. Catalyzes the deamination of dCTP to dUTP. In Wolbachia sp. subsp. Brugia malayi (strain TRS), this protein is dCTP deaminase.